Reading from the N-terminus, the 492-residue chain is GDP-fucose protein O-fucosyltransferase 4 (492 aa).

At methionine 1–arginine 7 the chain is on the cytoplasmic side. Residues valine 8–histidine 24 traverse the membrane as a helical; Signal-anchor for type II membrane protein segment. Over glycine 25–leucine 492 the chain is Lumenal. A glycan (N-linked (GlcNAc...) asparagine) is linked at asparagine 166. Cysteine 389 and cysteine 392 form a disulfide bridge. N-linked (GlcNAc...) asparagine glycosylation is present at asparagine 443.

This sequence belongs to the glycosyltransferase 10 family.

Its subcellular location is the endoplasmic reticulum membrane. It carries out the reaction L-threonyl-[protein] + GDP-beta-L-fucose = 3-O-(alpha-L-fucosyl)-L-threonyl-[protein] + GDP + H(+). The catalysed reaction is L-seryl-[protein] + GDP-beta-L-fucose = 3-O-(alpha-L-fucosyl)-L-seryl-[protein] + GDP + H(+). Its pathway is protein modification; protein glycosylation. In terms of biological role, protein O-fucosyltransferase that specifically catalyzes O-fucosylation of serine or threonine residues in EMI domains of target proteins, such as MMRN1, MMRN2 and EMID1. Attaches fucose through an O-glycosidic linkage. O-fucosylation of EMI domain-containing proteins may be required for facilitating protein folding and secretion. Also shows minor alpha-(1,3)-fucosyltransferase activity toward activity toward biantennary N-glycan acceptors. However, this was tested with a library of synthetic substrates and this activity is unsure in vivo. In Homo sapiens (Human), this protein is GDP-fucose protein O-fucosyltransferase 4.